The primary structure comprises 55 residues: Conotoxin Cal14.14 (55 aa).

A signal peptide spans 1–20; it reads MFRLGVFLLTFLLLVSMATS. 2 disulfide bridges follow: C34/C48 and C38/C52.

Expressed by the venom duct.

Its subcellular location is the secreted. Its function is as follows. Probable neurotoxin. The polypeptide is Conotoxin Cal14.14 (Californiconus californicus (California cone)).